Reading from the N-terminus, the 155-residue chain is Ribosomal RNA large subunit methyltransferase H (155 aa).

Residues L73, G104, and 123–128 (LSPLTL) contribute to the S-adenosyl-L-methionine site.

This sequence belongs to the RNA methyltransferase RlmH family. As to quaternary structure, homodimer.

The protein resides in the cytoplasm. It catalyses the reaction pseudouridine(1915) in 23S rRNA + S-adenosyl-L-methionine = N(3)-methylpseudouridine(1915) in 23S rRNA + S-adenosyl-L-homocysteine + H(+). Its function is as follows. Specifically methylates the pseudouridine at position 1915 (m3Psi1915) in 23S rRNA. This chain is Ribosomal RNA large subunit methyltransferase H, found in Pseudomonas putida (strain GB-1).